Consider the following 333-residue polypeptide: Late embryogenesis abundant protein 1 (333 aa).

Disordered regions lie at residues 1–20 (MASR…RRAA) and 116–246 (KDYT…GQGQ). Residues 3-52 (SRQDRREARAEADARRAAEEIARARDERVMQAEVDARSAADEIARARADR) are a coiled coil. Composition is skewed to basic and acidic residues over residues 116-163 (KDYT…KDAV), 172-219 (EATK…DATK), and 227-241 (DKAR…DATD).

This sequence belongs to the LEA type 4 family.

The chain is Late embryogenesis abundant protein 1 (LEA1) from Oryza sativa subsp. indica (Rice).